We begin with the raw amino-acid sequence, 404 residues long: NADH-quinone oxidoreductase subunit D (404 aa).

Belongs to the complex I 49 kDa subunit family. NDH-1 is composed of 14 different subunits. Subunits NuoB, C, D, E, F, and G constitute the peripheral sector of the complex.

It localises to the cell inner membrane. It catalyses the reaction a quinone + NADH + 5 H(+)(in) = a quinol + NAD(+) + 4 H(+)(out). Functionally, NDH-1 shuttles electrons from NADH, via FMN and iron-sulfur (Fe-S) centers, to quinones in the respiratory chain. The immediate electron acceptor for the enzyme in this species is believed to be ubiquinone. Couples the redox reaction to proton translocation (for every two electrons transferred, four hydrogen ions are translocated across the cytoplasmic membrane), and thus conserves the redox energy in a proton gradient. This Dinoroseobacter shibae (strain DSM 16493 / NCIMB 14021 / DFL 12) protein is NADH-quinone oxidoreductase subunit D.